A 327-amino-acid polypeptide reads, in one-letter code: Ubiquinone biosynthesis protein COQ4, mitochondrial (327 aa).

Histidine 208, aspartate 209, histidine 212, and glutamate 224 together coordinate Zn(2+).

The protein belongs to the COQ4 family. As to quaternary structure, component of a multi-subunit COQ enzyme complex, composed of at least COQ3, COQ4, COQ5, COQ6, COQ7 and COQ9. The cofactor is Zn(2+).

The protein localises to the mitochondrion inner membrane. It carries out the reaction a 4-hydroxy-3-methoxy-5-(all-trans-polyprenyl)benzoate + H(+) = a 2-methoxy-6-(all-trans-polyprenyl)phenol + CO2. It functions in the pathway cofactor biosynthesis; ubiquinone biosynthesis. In terms of biological role, lyase that catalyzes the C1-decarboxylation of 4-hydroxy-3-methoxy-5-(all-trans-polyprenyl)benzoic acid into 2-methoxy-6-(all-trans-polyprenyl)phenol during ubiquinone biosynthesis. The protein is Ubiquinone biosynthesis protein COQ4, mitochondrial of Lachancea thermotolerans (strain ATCC 56472 / CBS 6340 / NRRL Y-8284) (Yeast).